The primary structure comprises 163 residues: Low molecular weight protein-tyrosine phosphatase A (163 aa).

Cys11 acts as the Nucleophile in catalysis. Residue Arg17 is part of the active site. The Proton donor role is filled by Asp126.

Belongs to the low molecular weight phosphotyrosine protein phosphatase family.

It carries out the reaction O-phospho-L-tyrosyl-[protein] + H2O = L-tyrosyl-[protein] + phosphate. Its function is as follows. Key virulence factor required for mycobacterial survival within host macrophages. Exhibits protein tyrosine phosphatase activity. In terms of biological role, supports mycobacteria survival during infection by modulation of the phagosome maturation and modulation of the normal host signaling pathways, including host innate immune responses and cell apoptosis. The sequence is that of Low molecular weight protein-tyrosine phosphatase A (ptpA) from Mycobacterium bovis (strain ATCC BAA-935 / AF2122/97).